The following is a 431-amino-acid chain: Enolase (431 aa).

Q168 provides a ligand contact to (2R)-2-phosphoglycerate. E210 (proton donor) is an active-site residue. Positions 247, 291, and 318 each coordinate Mg(2+). (2R)-2-phosphoglycerate contacts are provided by K343, R372, S373, and K394. K343 serves as the catalytic Proton acceptor.

It belongs to the enolase family. As to quaternary structure, component of the RNA degradosome, a multiprotein complex involved in RNA processing and mRNA degradation. Mg(2+) serves as cofactor.

The protein resides in the cytoplasm. The protein localises to the secreted. Its subcellular location is the cell surface. It carries out the reaction (2R)-2-phosphoglycerate = phosphoenolpyruvate + H2O. Its pathway is carbohydrate degradation; glycolysis; pyruvate from D-glyceraldehyde 3-phosphate: step 4/5. Its function is as follows. Catalyzes the reversible conversion of 2-phosphoglycerate (2-PG) into phosphoenolpyruvate (PEP). It is essential for the degradation of carbohydrates via glycolysis. This is Enolase from Acinetobacter baylyi (strain ATCC 33305 / BD413 / ADP1).